The primary structure comprises 513 residues: GMP synthase [glutamine-hydrolyzing] (513 aa).

The Glutamine amidotransferase type-1 domain maps to 9–198 (LILVLDFGSQ…VRRVCECKGQ (190 aa)). Catalysis depends on Cys-86, which acts as the Nucleophile. Active-site residues include His-172 and Glu-174. One can recognise a GMPS ATP-PPase domain in the interval 199-388 (WTMENFIEIE…LGIPEHLVWR (190 aa)). 226–232 (SGGVDSS) lines the ATP pocket.

Homodimer.

It catalyses the reaction XMP + L-glutamine + ATP + H2O = GMP + L-glutamate + AMP + diphosphate + 2 H(+). Its pathway is purine metabolism; GMP biosynthesis; GMP from XMP (L-Gln route): step 1/1. Functionally, catalyzes the synthesis of GMP from XMP. This chain is GMP synthase [glutamine-hydrolyzing], found in Staphylococcus aureus (strain MSSA476).